Consider the following 249-residue polypeptide: MKLNERSLAFYATCDAPVDNAGFLYKKGGRHAAYHRRWFVLRGNMLFYFEDAASREPVGVIILEGCTVELVEAAEEFAFAVRFAGTRARTYVLAAESQDAMEGWVKALSRASFDYLRLVVRELEQQLAAVRGGGGMALPQPQPQSLPLPPSLPSALAPVPSLPSAPAPVPALPLPRRPSALPPKENGCAVWSTEATFRPGPEPPPPPPRRRASAPHGPLDMAPFARLHECYGQEIRALRGQWLSSRVQP.

The 97-residue stretch at 17–113 (PVDNAGFLYK…WVKALSRASF (97 aa)) folds into the PH domain. 2 disordered regions span residues 134–159 (GGMA…LAPV) and 194–219 (EATF…HGPL). Residues 140–152 (QPQPQSLPLPPSL) are compositionally biased toward pro residues. Phosphoserine is present on Ser-213. The F&amp;H signature appears at 223 to 235 (PFARLHECYGQEI).

Belongs to the sesquipedalian family. In terms of assembly, forms homodimers and heterodimers with PHETA2. Interacts with OCRL and INPP5B. Interaction with OCRL may be important for endosomal morphology and function.

The protein resides in the early endosome. Its subcellular location is the recycling endosome. It is found in the golgi apparatus. It localises to the trans-Golgi network. The protein localises to the cytoplasmic vesicle. The protein resides in the clathrin-coated vesicle. Plays a role in endocytic trafficking. Required for receptor recycling from endosomes, both to the trans-Golgi network and the plasma membrane. In Homo sapiens (Human), this protein is Sesquipedalian-1.